The sequence spans 177 residues: ATP synthase subunit delta (177 aa).

The protein belongs to the ATPase delta chain family. As to quaternary structure, F-type ATPases have 2 components, F(1) - the catalytic core - and F(0) - the membrane proton channel. F(1) has five subunits: alpha(3), beta(3), gamma(1), delta(1), epsilon(1). F(0) has three main subunits: a(1), b(2) and c(10-14). The alpha and beta chains form an alternating ring which encloses part of the gamma chain. F(1) is attached to F(0) by a central stalk formed by the gamma and epsilon chains, while a peripheral stalk is formed by the delta and b chains.

It localises to the cell inner membrane. Its function is as follows. F(1)F(0) ATP synthase produces ATP from ADP in the presence of a proton or sodium gradient. F-type ATPases consist of two structural domains, F(1) containing the extramembraneous catalytic core and F(0) containing the membrane proton channel, linked together by a central stalk and a peripheral stalk. During catalysis, ATP synthesis in the catalytic domain of F(1) is coupled via a rotary mechanism of the central stalk subunits to proton translocation. Functionally, this protein is part of the stalk that links CF(0) to CF(1). It either transmits conformational changes from CF(0) to CF(1) or is implicated in proton conduction. This is ATP synthase subunit delta from Haemophilus influenzae (strain PittEE).